Reading from the N-terminus, the 44-residue chain is TFEPNAEECIVDGRCKHRSDWPCEMSSGTTGRCDVSLGACGCSN.

Glutamate 7, glutamate 8, and glutamate 24 each carry 4-carboxyglutamate. Disulfide bonds link cysteine 9/cysteine 33, cysteine 15/cysteine 40, and cysteine 23/cysteine 42.

As to expression, expressed by the venom duct.

It is found in the secreted. In Californiconus californicus (California cone), this protein is Conotoxin Cl9a.